A 1358-amino-acid chain; its full sequence is DNA-directed RNA polymerase subunit beta (1358 aa).

Belongs to the RNA polymerase beta chain family. As to quaternary structure, the RNAP catalytic core consists of 2 alpha, 1 beta, 1 beta' and 1 omega subunit. When a sigma factor is associated with the core the holoenzyme is formed, which can initiate transcription.

The catalysed reaction is RNA(n) + a ribonucleoside 5'-triphosphate = RNA(n+1) + diphosphate. Functionally, DNA-dependent RNA polymerase catalyzes the transcription of DNA into RNA using the four ribonucleoside triphosphates as substrates. The protein is DNA-directed RNA polymerase subunit beta of Thioalkalivibrio sulfidiphilus (strain HL-EbGR7).